The sequence spans 615 residues: Delta(14)-sterol reductase LBR (615 aa).

The region spanning 1-62 (MPSRKFADGE…DIKPLTSFRQ (62 aa)) is the Tudor domain. Topologically, residues 1-211 (MPSRKFADGE…IRAKDLEFGG (211 aa)) are nuclear. The disordered stretch occupies residues 53 to 109 (DIKPLTSFRQRKGGSTSSSPSRRRGSRSRSRSRSPGRPPKSARRSASASHQADIKEA). Lys-55 carries the N6-acetyllysine modification. At Thr-58 the chain carries Phosphothreonine. 2 positions are modified to phosphoserine: Ser-59 and Ser-67. A phosphoserine; by CDK1 mark is found at Ser-71 and Ser-86. Over residues 73 to 86 (SRRRGSRSRSRSRS) the composition is skewed to basic residues. Phosphoserine is present on residues Ser-97 and Ser-99. Thr-118 bears the Phosphothreonine mark. Ser-128 is subject to Phosphoserine. Thr-200 is modified (phosphothreonine). 8 helical membrane-spanning segments follow: residues 212-232 (VPGV…LLLM), 258-278 (VFGV…LPIG), 299-319 (FYAF…GVEF), 326-346 (FLQF…YLYM), 415-435 (VPSL…VDAL), 447-467 (IIHD…VPFI), 481-501 (EVSW…YVIF), and 561-581 (ACGF…MLLV). Residues Lys-594 and Lys-601 each carry the N6-acetyllysine modification.

This sequence belongs to the ERG4/ERG24 family. As to quaternary structure, interacts with CBX5. Interacts with DNA. Interaction with DNA is sequence independent with higher affinity for supercoiled and relaxed circular DNA than linear DNA. Interacts with lamin B. Interacts with CLNK. Interacts with TMEM147; promoting LBR localization to the nucleus inner membrane. Post-translationally, phosphorylated by CDK1 in mitosis when the inner nuclear membrane breaks down into vesicles that dissociate from the lamina and the chromatin. It is phosphorylated by different protein kinases in interphase when the membrane is associated with these structures. Phosphorylation of LBR and HP1 proteins may be responsible for some of the alterations in chromatin organization and nuclear structure which occur at various times during the cell cycle. Phosphorylated by SRPK1. In late anaphase LBR is dephosphorylated, probably by PP1 and/or PP2A, allowing reassociation with chromatin.

Its subcellular location is the nucleus inner membrane. It localises to the nucleus. The protein localises to the cytoplasm. It is found in the endoplasmic reticulum membrane. It carries out the reaction 5alpha-cholest-8,14-dien-3beta-ol + NADPH + H(+) = 5alpha-cholest-8-en-3beta-ol + NADP(+). It catalyses the reaction 4,4-dimethyl-5alpha-cholesta-8,24-dien-3beta-ol + NADP(+) = 4,4-dimethyl-5alpha-cholesta-8,14,24-trien-3beta-ol + NADPH + H(+). The enzyme catalyses 4,4-dimethyl-8,14-cholestadien-3beta-ol + NADPH + H(+) = 4,4-dimethyl-5alpha-cholest-8-en-3beta-ol + NADP(+). The protein operates within steroid biosynthesis; cholesterol biosynthesis. Its function is as follows. Catalyzes the reduction of the C14-unsaturated bond of lanosterol, as part of the metabolic pathway leading to cholesterol biosynthesis. Plays a critical role in myeloid cell cholesterol biosynthesis which is essential to both myeloid cell growth and functional maturation. Mediates the activation of NADPH oxidases, perhaps by maintaining critical levels of cholesterol required for membrane lipid raft formation during neutrophil differentiation. Anchors the lamina and the heterochromatin to the inner nuclear membrane. The protein is Delta(14)-sterol reductase LBR (LBR) of Pongo abelii (Sumatran orangutan).